The primary structure comprises 396 residues: Alpha-1-antitrypsin (396 aa).

The N-terminal stretch at 1-2 is a signal peptide; sequence HV. The disordered stretch occupies residues 1–24; sequence HVEDPQGDAAQKTDTSHHDQEHST. Over residues 14-24 the composition is skewed to basic and acidic residues; it reads DTSHHDQEHST. The residue at position 16 (S16) is a Phosphoserine. N-linked (GlcNAc...) asparagine glycans are attached at residues N48, N85, N123, and N249. The interval 351–370 is RCL; the sequence is GAMFLEAIPMSIPPEVKFNK. The residue at position 361 (S361) is a Phosphoserine.

This sequence belongs to the serpin family. Interacts with CELA2A. Interacts with ERGIC3 and LMAN1/ERGIC53. Interacts with PRSS1/Trypsin. As to expression, plasma.

Its subcellular location is the secreted. Inhibitor of serine proteases. Its primary target is elastase, but it also has a moderate affinity for plasmin and thrombin. Inhibits trypsin, chymotrypsin and plasminogen activator. This chain is Alpha-1-antitrypsin (SERPINA1), found in Chlorocebus aethiops (Green monkey).